Consider the following 30-residue polypeptide: MHLSTLPNVPWPNRSFTTKRPPLPNMSFSW.

The segment at 1-30 is disordered; that stretch reads MHLSTLPNVPWPNRSFTTKRPPLPNMSFSW.

This is an uncharacterized protein from Saccharomyces cerevisiae (strain ATCC 204508 / S288c) (Baker's yeast).